A 58-amino-acid chain; its full sequence is Gigasin-4 (58 aa).

Component of the organic matrix of calcified shell layers.

The sequence is that of Gigasin-4 from Magallana gigas (Pacific oyster).